We begin with the raw amino-acid sequence, 516 residues long: Poly(U)-binding-splicing factor PUF60-B (516 aa).

RRM domains lie at 86–164 (CRVY…RPGS) and 183–261 (NRIY…KAVT). Positions 356–398 (TAPASMGTPTSAVQLHTEVKREEDSRRTAEDHSAPVGNGQDSE) are disordered. The segment covering 372 to 388 (TEVKREEDSRRTAEDHS) has biased composition (basic and acidic residues). Positions 419 to 506 (TVMVLRNMVG…RKVVAELYDQ (88 aa)) constitute an RRM 3; atypical domain.

Belongs to the RRM half pint family.

It is found in the nucleus. Functionally, DNA- and RNA-binding protein, involved in transcription repression and pre-mRNA splicing. In Danio rerio (Zebrafish), this protein is Poly(U)-binding-splicing factor PUF60-B (puf60b).